The sequence spans 1146 residues: Probable transport protein MmpL12 (1146 aa).

Transmembrane regions (helical) follow at residues 25 to 45 (LIVIGCWIAVAAALTLLLPTL), 206 to 226 (VSVLIILILVYRNLVTMLVPL), 254 to 274 (AIVFMSAVMIGAGTDYAVFLI), 298 to 318 (IGKVITASAATVAVTFLAMVF), 330 to 350 (AIAVAITVSLLGAVTLLPAIL), 382 to 402 (TIHLVGSLIVLVALAGCTLLI), 826 to 846 (FIVIATIVIVFLILVILLRAL), 850 to 870 (IYLIGSVLISYLSALGIGTLV), 883 to 903 (LPGLSFILLVAIGADYNMLLI), 928 to 948 (VITSAGLIFAASMFGLVGASI), and 949 to 969 (NTMAQAGFTIGIGIVLDTFLV).

Belongs to the resistance-nodulation-cell division (RND) (TC 2.A.6) family. MmpL subfamily.

The protein resides in the cell membrane. This Mycobacterium tuberculosis (strain CDC 1551 / Oshkosh) protein is Probable transport protein MmpL12 (mmpL12).